Here is a 147-residue protein sequence, read N- to C-terminus: Ribonuclease H (147 aa).

Residues 5–141 form the RNase H type-1 domain; the sequence is ARKQITLYSD…CDELARNEAE (137 aa). Residues Asp-14, Glu-52, Asp-74, and Asp-133 each coordinate Mg(2+).

It belongs to the RNase H family. Monomer. Mg(2+) is required as a cofactor.

It is found in the cytoplasm. The enzyme catalyses Endonucleolytic cleavage to 5'-phosphomonoester.. Endonuclease that specifically degrades the RNA of RNA-DNA hybrids. This is Ribonuclease H from Sulfurovum sp. (strain NBC37-1).